An 85-amino-acid polypeptide reads, in one-letter code: 4-hydroxyphenylacetate decarboxylase small subunit (85 aa).

Positions 4, 7, 20, 34, 43, 46, 60, and 78 each coordinate [4Fe-4S] cluster.

The protein belongs to the HPA decarboxylase small subunit family. As to quaternary structure, heterooctamer consisting of 4 large (HpdB) subunits and 4 small (HpdC) subunits, arranged as a tetramer of heterodimers. Requires [4Fe-4S] cluster as cofactor.

It catalyses the reaction 4-hydroxyphenylacetate + H(+) = 4-methylphenol + CO2. The enzyme catalyses 3,4-dihydroxyphenylacetate + H(+) = 4-methylcatechol + CO2. In terms of biological role, component of the HPA decarboxylase that decarboxylates phenylacetates with a hydroxyl group in the p-position. Active toward 4-hydroxyphenylacetate and 3,4-dihydroxyphenylacetate, forming 4-methylphenol and 4-methylcatechol, respectively. Is likely involved in the catabolism of aromatic amino acids such as tyrosine fermentation. 4-methylphenol (p-cresol) formation provides metabolic toxicity, which allows an active suppression of other microbes and may provide growth advantages for the producers in highly competitive environments. The small subunit is essential for enzymatic activity of HPA decarboxylase, and also seems to be involved in the regulation of the enzyme oligomeric state and catalytic activity. This is 4-hydroxyphenylacetate decarboxylase small subunit from Clostridioides difficile (strain 630) (Peptoclostridium difficile).